The chain runs to 133 residues: Ribosome-binding factor A (133 aa).

This sequence belongs to the RbfA family. Monomer. Binds 30S ribosomal subunits, but not 50S ribosomal subunits or 70S ribosomes.

The protein localises to the cytoplasm. Functionally, one of several proteins that assist in the late maturation steps of the functional core of the 30S ribosomal subunit. Associates with free 30S ribosomal subunits (but not with 30S subunits that are part of 70S ribosomes or polysomes). Required for efficient processing of 16S rRNA. May interact with the 5'-terminal helix region of 16S rRNA. The protein is Ribosome-binding factor A of Salmonella typhimurium (strain LT2 / SGSC1412 / ATCC 700720).